Reading from the N-terminus, the 593-residue chain is Proteasome-associated ATPase (593 aa).

Positions 23–95 (LLSQISYLEE…LKEEVDRLGQ (73 aa)) form a coiled coil. 282–287 (GCGKTL) contacts ATP. Positions 592–593 (YL) are docks into pockets in the proteasome alpha-ring.

It belongs to the AAA ATPase family. Homohexamer. Assembles into a hexameric ring structure that caps the 20S proteasome core. Strongly interacts with the prokaryotic ubiquitin-like protein Pup through a hydrophobic interface; the interacting region of ARC lies in its N-terminal coiled-coil domain. There is one Pup binding site per ARC hexamer ring. Upon ATP-binding, the C-terminus of ARC interacts with the alpha-rings of the proteasome core, possibly by binding to the intersubunit pockets.

It functions in the pathway protein degradation; proteasomal Pup-dependent pathway. In terms of biological role, ATPase which is responsible for recognizing, binding, unfolding and translocation of pupylated proteins into the bacterial 20S proteasome core particle. May be essential for opening the gate of the 20S proteasome via an interaction with its C-terminus, thereby allowing substrate entry and access to the site of proteolysis. Thus, the C-termini of the proteasomal ATPase may function like a 'key in a lock' to induce gate opening and therefore regulate proteolysis. This Geodermatophilus obscurus (strain ATCC 25078 / DSM 43160 / JCM 3152 / CCUG 61914 / KCC A-0152 / KCTC 9177 / NBRC 13315 / NRRL B-3577 / G-20) protein is Proteasome-associated ATPase.